Reading from the N-terminus, the 446-residue chain is Probable 1,4-beta-D-glucan cellobiohydrolase A (446 aa).

A signal peptide spans 1–17; sequence MYQRALLFSALLSVSRA. Asparagine 81 carries an N-linked (GlcNAc...) asparagine glycan. Glutamate 226 functions as the Nucleophile in the catalytic mechanism. Glutamate 231 (proton donor) is an active-site residue. N-linked (GlcNAc...) asparagine glycosylation is found at asparagine 284 and asparagine 333. The disordered stretch occupies residues 399–420; sequence TDADPSQPGVARGTCEQGAGDP.

Belongs to the glycosyl hydrolase 7 (cellulase C) family.

It is found in the secreted. It catalyses the reaction Hydrolysis of (1-&gt;4)-beta-D-glucosidic linkages in cellulose and cellotetraose, releasing cellobiose from the non-reducing ends of the chains.. The biological conversion of cellulose to glucose generally requires three types of hydrolytic enzymes: (1) Endoglucanases which cut internal beta-1,4-glucosidic bonds; (2) Exocellobiohydrolases that cut the disaccharide cellobiose from the non-reducing end of the cellulose polymer chain; (3) Beta-1,4-glucosidases which hydrolyze the cellobiose and other short cello-oligosaccharides to glucose. This Emericella nidulans (strain FGSC A4 / ATCC 38163 / CBS 112.46 / NRRL 194 / M139) (Aspergillus nidulans) protein is Probable 1,4-beta-D-glucan cellobiohydrolase A (cbhA).